The sequence spans 116 residues: Fluoride-specific ion channel FluC 1 (116 aa).

The next 4 helical transmembrane spans lie at 1 to 21, 31 to 51, 58 to 78, and 92 to 112; these read MGKLFLIGAGGFIGACLRYTV, IPAGTLTVNLLGTIVLAFLTF, MVYLVNIGILGSFTTFSTFAY, and FFLNIFLNVALCLVGVSIAYL. The Na(+) site is built by glycine 68 and threonine 71.

It belongs to the fluoride channel Fluc/FEX (TC 1.A.43) family.

The protein localises to the cell membrane. It catalyses the reaction fluoride(in) = fluoride(out). Na(+) is not transported, but it plays an essential structural role and its presence is essential for fluoride channel function. In terms of biological role, fluoride-specific ion channel. Important for reducing fluoride concentration in the cell, thus reducing its toxicity. The sequence is that of Fluoride-specific ion channel FluC 1 from Methanosarcina barkeri (strain Fusaro / DSM 804).